A 22-amino-acid chain; its full sequence is Peptide PGLa-R1 (22 aa).

Leu22 carries the post-translational modification Leucine amide.

As to expression, expressed by the skin glands.

The protein localises to the secreted. Antimicrobial peptide. The polypeptide is Peptide PGLa-R1 (Xenopus ruwenzoriensis (Uganda clawed frog)).